A 94-amino-acid polypeptide reads, in one-letter code: Large ribosomal subunit protein uL23c (94 aa).

The protein belongs to the universal ribosomal protein uL23 family. As to quaternary structure, part of the 50S ribosomal subunit.

It is found in the plastid. It localises to the chloroplast. Functionally, binds to 23S rRNA. The chain is Large ribosomal subunit protein uL23c (rpl23) from Tupiella akineta (Green alga).